The following is a 409-amino-acid chain: Arginine deiminase (409 aa).

Cys399 acts as the Amidino-cysteine intermediate in catalysis.

The protein belongs to the arginine deiminase family.

The protein localises to the cytoplasm. The enzyme catalyses L-arginine + H2O = L-citrulline + NH4(+). Its pathway is amino-acid degradation; L-arginine degradation via ADI pathway; carbamoyl phosphate from L-arginine: step 1/2. The polypeptide is Arginine deiminase (arcA) (Borreliella afzelii (Borrelia afzelii)).